Here is a 637-residue protein sequence, read N- to C-terminus: Probable ATP-binding protein YheS (637 aa).

ABC transporter domains lie at 2-246 and 313-527; these read IVFS…AQQQ and LKME…KQEN. ATP is bound by residues 34–41 and 345–352; these read GKNGCGKS and GRNGAGKS. The tract at residues 523–559 is disordered; sequence QKQENQTDEAPKENANSAQARKDQKRREAELRAQTQP. Residues 542-553 are compositionally biased toward basic and acidic residues; that stretch reads ARKDQKRREAEL.

The protein belongs to the ABC transporter superfamily. ABCF family. YheS subfamily.

In terms of biological role, genetic data indicate it may be involved in ribosome assembly or function. Ectopic expression exacerbates the cold-sensitive growth phenotype of a bipA deletion. The chain is Probable ATP-binding protein YheS (yheS) from Escherichia coli O6:H1 (strain CFT073 / ATCC 700928 / UPEC).